The primary structure comprises 319 residues: Methionyl-tRNA formyltransferase (319 aa).

Ser-110 to Pro-113 is a (6S)-5,6,7,8-tetrahydrofolate binding site.

It belongs to the Fmt family.

It carries out the reaction L-methionyl-tRNA(fMet) + (6R)-10-formyltetrahydrofolate = N-formyl-L-methionyl-tRNA(fMet) + (6S)-5,6,7,8-tetrahydrofolate + H(+). In terms of biological role, attaches a formyl group to the free amino group of methionyl-tRNA(fMet). The formyl group appears to play a dual role in the initiator identity of N-formylmethionyl-tRNA by promoting its recognition by IF2 and preventing the misappropriation of this tRNA by the elongation apparatus. The protein is Methionyl-tRNA formyltransferase of Geobacillus thermodenitrificans (strain NG80-2).